A 710-amino-acid chain; its full sequence is WD repeat-containing protein CG11141 (710 aa).

WD repeat units lie at residues 31–70 and 133–172; these read FFPA…MQKL and LHKC…HLSK. The disordered stretch occupies residues 283–307; that stretch reads LNPKQRSEPSGTHHTSASTSSTRHS. The segment covering 292 to 307 has biased composition (low complexity); it reads SGTHHTSASTSSTRHS. Residue Thr-488 is modified to Phosphothreonine. A Phosphoserine modification is found at Ser-553. Disordered stretches follow at residues 612–635 and 685–710; these read ASIQ…GEPV and DPLA…FLDN. Polar residues-rich tracts occupy residues 613 to 624 and 694 to 704; these read SIQTSSRENATN and PATSDSNTSSE.

Belongs to the WD repeat KIAA0329 family.

The protein is WD repeat-containing protein CG11141 of Drosophila melanogaster (Fruit fly).